A 940-amino-acid polypeptide reads, in one-letter code: Phagocyte signaling-impaired protein (940 aa).

The stretch at 77–110 (STTLHVMTLCYKETDQLDKICQIFTSASKQLPGN) is one TPR repeat.

It belongs to the MDM20/NAA25 family. In terms of assembly, component of the N-terminal acetyltransferase B (NatB) complex.

The protein resides in the lysosome. Its function is as follows. Non-catalytic subunit of the NatB complex which catalyzes acetylation of the N-terminal methionine residues of proteins beginning with Met-Asp or Met-Glu. Has 2 roles in the larval immune response: required both for the phagocytic degradation of internalized bacteria and for the induction of Defensin in the fat body. Within the phagocytic blood cells, has a role in detection of infection and activation of the humoral immune response. The protein is Phagocyte signaling-impaired protein of Aedes aegypti (Yellowfever mosquito).